A 481-amino-acid chain; its full sequence is Cys-Gly metallodipeptidase DUG1 (481 aa).

Residue His-102 coordinates Zn(2+). Asp-104 is an active-site residue. Asp-137 contacts Zn(2+). Glu-171 functions as the Proton acceptor in the catalytic mechanism. Residues Glu-172, Asp-200, and His-450 each contribute to the Zn(2+) site. Position 451 is a phosphoserine (Ser-451).

It belongs to the peptidase M20A family. In terms of assembly, homodimer. Component of the GSH degradosomal complex composed of at least DUG1, DUG2 and DUG3. Zn(2+) is required as a cofactor. The cofactor is Mn(2+).

Its subcellular location is the cytoplasm. It is found in the mitochondrion. Functionally, catalytic component of the GSH degradosomal complex involved in the degradation of glutathione (GSH) and other peptides containing a gamma-glu-X bond. Also functions in a DUG2-DUG3-independent manner as a dipeptidase with high specificity for Cys-Gly and no activity toward tri- or tetrapeptides. The polypeptide is Cys-Gly metallodipeptidase DUG1 (DUG1) (Saccharomyces cerevisiae (strain ATCC 204508 / S288c) (Baker's yeast)).